Reading from the N-terminus, the 311-residue chain is Reaction center protein L chain (311 aa).

3 helical membrane passes run Phe-68–Leu-90, Gly-123–Leu-151, and His-156–Ala-178. His-183 and His-213 together coordinate (7R,8Z)-bacteriochlorophyll b. Residues Pro-211–Ala-238 traverse the membrane as a helical segment. Position 230 (His-230) interacts with Fe cation. Residue Phe-253 participates in a ubiquinone binding. Residues Gly-262–Leu-287 form a helical membrane-spanning segment. His-267 provides a ligand contact to Fe cation.

The protein belongs to the reaction center PufL/M/PsbA/D family. Reaction center is composed of four bacteriochlorophylls, two bacteriopheophytins, two ubiquinones, one iron, and two highly hydrophobic polypeptide chains (designated L and M).

The protein resides in the cell membrane. Functionally, the reaction center is a membrane-bound complex that mediates the initial photochemical event in the electron transfer process of photosynthesis. The protein is Reaction center protein L chain (pufL) of Chloroflexus aurantiacus (strain ATCC 29366 / DSM 635 / J-10-fl).